Here is a 224-residue protein sequence, read N- to C-terminus: Deoxyribose-phosphate aldolase (224 aa).

Asp-92 (proton donor/acceptor) is an active-site residue. Lys-154 (schiff-base intermediate with acetaldehyde) is an active-site residue. Lys-183 serves as the catalytic Proton donor/acceptor.

The protein belongs to the DeoC/FbaB aldolase family. DeoC type 1 subfamily.

The protein resides in the cytoplasm. The enzyme catalyses 2-deoxy-D-ribose 5-phosphate = D-glyceraldehyde 3-phosphate + acetaldehyde. It functions in the pathway carbohydrate degradation; 2-deoxy-D-ribose 1-phosphate degradation; D-glyceraldehyde 3-phosphate and acetaldehyde from 2-deoxy-alpha-D-ribose 1-phosphate: step 2/2. Its function is as follows. Catalyzes a reversible aldol reaction between acetaldehyde and D-glyceraldehyde 3-phosphate to generate 2-deoxy-D-ribose 5-phosphate. This Histophilus somni (strain 129Pt) (Haemophilus somnus) protein is Deoxyribose-phosphate aldolase.